A 186-amino-acid polypeptide reads, in one-letter code: MGKNLGLVVSFYLCITFALGEYFSETRPITPKQLVVTNLHFFFHDTLTAPNPSAILIAKPTHTRGDNDSSPSPFGSLFALDDPLTVGPDPKSEKIGNARGMYVSSGKHVPTLTMYVDFGFTSGKFNGSSIAVFSRNTITEKEREVAVVGGRGRFRMARGVAQLNTYYVNLTNGDAIVEYNVTLYHY.

The signal sequence occupies residues 1-20 (MGKNLGLVVSFYLCITFALG). N-linked (GlcNAc...) asparagine glycans are attached at residues asparagine 67, asparagine 126, asparagine 169, and asparagine 180.

This sequence belongs to the plant dirigent protein family. In terms of assembly, homodimer.

It localises to the secreted. The protein resides in the extracellular space. Its subcellular location is the apoplast. Its function is as follows. Dirigent proteins impart stereoselectivity on the phenoxy radical-coupling reaction, yielding optically active lignans from two molecules of coniferyl alcohol in the biosynthesis of lignans, flavonolignans, and alkaloids and thus plays a central role in plant secondary metabolism. The polypeptide is Dirigent protein 4 (DIR4) (Arabidopsis thaliana (Mouse-ear cress)).